A 341-amino-acid chain; its full sequence is DNA-directed RNA polymerase subunit alpha (341 aa).

Residues 1-233 form an alpha N-terminal domain (alpha-NTD) region; sequence MVREEVAGST…DLFLPFLHAE (233 aa). The interval 269–341 is alpha C-terminal domain (alpha-CTD); sequence IPLNCIFIDQ…IDLLKNKLSF (73 aa).

Belongs to the RNA polymerase alpha chain family. In plastids the minimal PEP RNA polymerase catalytic core is composed of four subunits: alpha, beta, beta', and beta''. When a (nuclear-encoded) sigma factor is associated with the core the holoenzyme is formed, which can initiate transcription.

The protein localises to the plastid. It is found in the chloroplast. It carries out the reaction RNA(n) + a ribonucleoside 5'-triphosphate = RNA(n+1) + diphosphate. In terms of biological role, DNA-dependent RNA polymerase catalyzes the transcription of DNA into RNA using the four ribonucleoside triphosphates as substrates. The protein is DNA-directed RNA polymerase subunit alpha of Lolium perenne (Perennial ryegrass).